The chain runs to 788 residues: Leucine-rich repeat and fibronectin type-III domain-containing protein 2 (788 aa).

An N-terminal signal peptide occupies residues 1-20 (METLLGGLLAFGMAFAVVDA). Residues 21-52 (CPKYCVCQNLSESLGTLCPSKGLLFVPPDIDR) enclose the LRRNT domain. Over 21-534 (CPKYCVCQNL…MHSQILGGTM (514 aa)) the chain is Extracellular. N-linked (GlcNAc...) asparagine glycosylation occurs at Asn-29. LRR repeat units follow at residues 53 to 74 (RTVE…DFAN), 77 to 98 (GLVD…SFLD), 101 to 122 (SLRS…TLRG), 125 to 146 (NLQH…AFED), 150 to 171 (TLED…SVRR), 174 to 195 (NLHQ…TFAD), and 198 to 219 (KLAR…PIFA). An LRRCT domain is found at 242 to 288 (NPLHCNCELLWLRRLERDDDLETCGSPGSLKGRYFWHIREEEFVCEP). The Ig-like domain occupies 289-375 (PLITQHTHKL…GEATATVEVS (87 aa)). Cysteines 310 and 359 form a disulfide. Residues Asn-332, Asn-341, and Asn-384 are each glycosylated (N-linked (GlcNAc...) asparagine). Residues 383 to 423 (SNSTSRMAPPKSRLSDITGSSKTSRGGGGSGAGEPPKSTPE) form a disordered region. The 97-residue stretch at 422–518 (PERAVLVSDV…GCAQFFTKAD (97 aa)) folds into the Fibronectin type-III domain. Residues 535-555 (ILVIGGIIVATLLVFIVILMV) traverse the membrane as a helical segment. The Cytoplasmic portion of the chain corresponds to 556-788 (RYKVCNHDTP…SSEWVMESTV (233 aa)). Positions 620-631 (CDSSSSSSLGSG) are enriched in low complexity. Disordered stretches follow at residues 620–655 (CDSS…PSLD) and 668–711 (SQRK…RSLL). Residues 642-651 (RLPPPAPRPK) are compositionally biased toward pro residues. The PDZ-binding motif lies at 785–788 (ESTV).

It belongs to the LRFN family. In terms of assembly, forms heteromeric complexes with LRFN1, LRFN3, LRFN4 and LRFN5. Can form homomeric complexes, but not across cell junctions. Interacts with DLG4. Directly interacts with DLG1, DLG2 and DLG3. Directly interacts with 2 NMDA receptor subunits GRIN1 and GRIN2A. Glycosylated. Predominantly expressed in the brain, with a weak, but broad expression in the cerebral cortex and diencephalic nuclei. Strongly expressed in both the pyramidal layer and the dentate gyrus of the hippocampus. Also detected in other parts of the central nervous system, including the olfactory bulb, pons, cerebellum, and medulla oblongata, as well as in the peripheral nervous system, such as the ganglia of cranial nerves and the dorsal root ganglion during gestation.

Its subcellular location is the membrane. It is found in the synapse. The protein resides in the postsynaptic cell membrane. In terms of biological role, promotes neurite outgrowth in hippocampal neurons. Enhances the cell surface expression of 2 NMDA receptor subunits GRIN1 and GRIN2A. May play a role in redistributing DLG4 to the cell periphery. In Mus musculus (Mouse), this protein is Leucine-rich repeat and fibronectin type-III domain-containing protein 2 (Lrfn2).